Reading from the N-terminus, the 451-residue chain is Phosphoglucosamine mutase (451 aa).

The Phosphoserine intermediate role is filled by S102. Residues S102, D242, D244, and D246 each contribute to the Mg(2+) site. A Phosphoserine modification is found at S102.

It belongs to the phosphohexose mutase family. The cofactor is Mg(2+). Post-translationally, activated by phosphorylation.

The enzyme catalyses alpha-D-glucosamine 1-phosphate = D-glucosamine 6-phosphate. In terms of biological role, catalyzes the conversion of glucosamine-6-phosphate to glucosamine-1-phosphate. This is Phosphoglucosamine mutase from Staphylococcus saprophyticus subsp. saprophyticus (strain ATCC 15305 / DSM 20229 / NCIMB 8711 / NCTC 7292 / S-41).